We begin with the raw amino-acid sequence, 104 residues long: L-rhamnose mutarotase (104 aa).

Tyr18 provides a ligand contact to substrate. His22 acts as the Proton donor in catalysis. Residues Tyr41 and 76–77 (WW) each bind substrate.

The protein belongs to the rhamnose mutarotase family. In terms of assembly, homodimer.

It is found in the cytoplasm. It catalyses the reaction alpha-L-rhamnose = beta-L-rhamnose. It participates in carbohydrate metabolism; L-rhamnose metabolism. Its function is as follows. Involved in the anomeric conversion of L-rhamnose. The protein is L-rhamnose mutarotase of Salmonella dublin (strain CT_02021853).